The sequence spans 286 residues: Putative WUSCHEL-related homeobox 2 (286 aa).

The tract at residues 1–25 is disordered; the sequence is MAPAVQQQQSGGGGGSTGAAAVGST. Residues 23-87 constitute a DNA-binding region (homeobox; WUS-type); that stretch reads GSTTRWCPTP…NHKARDRQKL (65 aa).

The protein belongs to the WUS homeobox family.

The protein localises to the nucleus. In terms of biological role, transcription factor which may be involved in developmental processes. This Oryza sativa subsp. japonica (Rice) protein is Putative WUSCHEL-related homeobox 2 (WOX2).